We begin with the raw amino-acid sequence, 329 residues long: GTPase Obg (329 aa).

The Obg domain maps to 1 to 159 (MQFIDQAIID…WSLQLELKLL (159 aa)). An OBG-type G domain is found at 160–328 (AEVGIIGLPN…LLSSIWYELG (169 aa)). ATP contacts are provided by residues 166–173 (GLPNAGKS), 191–195 (FTTLI), 213–216 (DIPG), 280–283 (NKKE), and 309–311 (SAV). Mg(2+) is bound by residues S173 and T193.

Belongs to the TRAFAC class OBG-HflX-like GTPase superfamily. OBG GTPase family. In terms of assembly, monomer. The cofactor is Mg(2+).

Its subcellular location is the cytoplasm. Functionally, an essential GTPase which binds GTP, GDP and possibly (p)ppGpp with moderate affinity, with high nucleotide exchange rates and a fairly low GTP hydrolysis rate. Plays a role in control of the cell cycle, stress response, ribosome biogenesis and in those bacteria that undergo differentiation, in morphogenesis control. In Prochlorococcus marinus (strain NATL1A), this protein is GTPase Obg.